Reading from the N-terminus, the 519-residue chain is Protein tweety homolog 1 (519 aa).

Topologically, residues M1 to L42 are extracellular. The helical transmembrane segment at V43 to I63 threads the bilayer. The Cytoplasmic portion of the chain corresponds to C64–R82. The helical transmembrane segment at L83–F103 threads the bilayer. Residues A104–W217 are Extracellular-facing. N142, N163, and N176 each carry an N-linked (GlcNAc...) asparagine glycan. Residues A218–F238 form a helical membrane-spanning segment. Topologically, residues C239–G245 are cytoplasmic. The helical transmembrane segment at A246–I266 threads the bilayer. At S267–M395 the chain is on the extracellular side. N-linked (GlcNAc...) asparagine glycans are attached at residues N328, N341, N348, and N389. A helical transmembrane segment spans residues S396–V416. At S417–M519 the chain is on the cytoplasmic side. The disordered stretch occupies residues Y459 to L485.

The protein belongs to the tweety family.

It is found in the cell membrane. Probable chloride channel. The chain is Protein tweety homolog 1 (ttyh-1) from Caenorhabditis elegans.